The sequence spans 204 residues: Refilin-A (204 aa).

The interval 1–52 (MVGHLHLQAMGDTREQSRDGLLDSPDSGLPPSPSPSPPFYALSPGTLDTRTT) is disordered. The segment covering 12 to 21 (DTREQSRDGL) has biased composition (basic and acidic residues). Residues 28 to 38 (GLPPSPSPSPP) are compositionally biased toward pro residues. Position 151 is an asymmetric dimethylarginine (R151).

Belongs to the Refilin family. Interacts with FLNA and FLNB. Detected in various tissues, with highest expression in lung, followed by spleen.

It localises to the cytoplasm. The protein resides in the cytoskeleton. Functionally, involved in the regulation of the perinuclear actin network and nuclear shape through interaction with filamins. Plays an essential role in the formation of cartilaginous skeletal elements. This Mus musculus (Mouse) protein is Refilin-A (Rflna).